The primary structure comprises 361 residues: Histidinol-phosphate aminotransferase (361 aa).

Position 219 is an N6-(pyridoxal phosphate)lysine (K219).

It belongs to the class-II pyridoxal-phosphate-dependent aminotransferase family. Histidinol-phosphate aminotransferase subfamily. As to quaternary structure, homodimer. Requires pyridoxal 5'-phosphate as cofactor.

It catalyses the reaction L-histidinol phosphate + 2-oxoglutarate = 3-(imidazol-4-yl)-2-oxopropyl phosphate + L-glutamate. Its pathway is amino-acid biosynthesis; L-histidine biosynthesis; L-histidine from 5-phospho-alpha-D-ribose 1-diphosphate: step 7/9. This chain is Histidinol-phosphate aminotransferase, found in Acinetobacter baumannii (strain SDF).